Reading from the N-terminus, the 177-residue chain is Antigen TyF1 (177 aa).

This sequence belongs to the Dps family. Homodecamer.

The polypeptide is Antigen TyF1 (Treponema pallidum subsp. pertenue (Yaws treponeme)).